The sequence spans 438 residues: UDP-N-acetylmuramoylalanine--D-glutamate ligase (438 aa).

Residue Gly112–Thr118 coordinates ATP.

The protein belongs to the MurCDEF family.

The protein localises to the cytoplasm. It carries out the reaction UDP-N-acetyl-alpha-D-muramoyl-L-alanine + D-glutamate + ATP = UDP-N-acetyl-alpha-D-muramoyl-L-alanyl-D-glutamate + ADP + phosphate + H(+). It participates in cell wall biogenesis; peptidoglycan biosynthesis. Functionally, cell wall formation. Catalyzes the addition of glutamate to the nucleotide precursor UDP-N-acetylmuramoyl-L-alanine (UMA). This is UDP-N-acetylmuramoylalanine--D-glutamate ligase from Escherichia coli O6:K15:H31 (strain 536 / UPEC).